A 261-amino-acid chain; its full sequence is Thiazole synthase (261 aa).

Lys102 functions as the Schiff-base intermediate with DXP in the catalytic mechanism. 1-deoxy-D-xylulose 5-phosphate is bound by residues Gly163, 189-190, and 211-212; these read AG and NT.

It belongs to the ThiG family. In terms of assembly, homotetramer. Forms heterodimers with either ThiH or ThiS.

It is found in the cytoplasm. The enzyme catalyses [ThiS sulfur-carrier protein]-C-terminal-Gly-aminoethanethioate + 2-iminoacetate + 1-deoxy-D-xylulose 5-phosphate = [ThiS sulfur-carrier protein]-C-terminal Gly-Gly + 2-[(2R,5Z)-2-carboxy-4-methylthiazol-5(2H)-ylidene]ethyl phosphate + 2 H2O + H(+). The protein operates within cofactor biosynthesis; thiamine diphosphate biosynthesis. Catalyzes the rearrangement of 1-deoxy-D-xylulose 5-phosphate (DXP) to produce the thiazole phosphate moiety of thiamine. Sulfur is provided by the thiocarboxylate moiety of the carrier protein ThiS. In vitro, sulfur can be provided by H(2)S. The sequence is that of Thiazole synthase from Acinetobacter baylyi (strain ATCC 33305 / BD413 / ADP1).